The following is a 372-amino-acid chain: tRNA-specific 2-thiouridylase MnmA (372 aa).

ATP-binding positions include 9–16 and Met-35; that span reads GMSGGVDS. Residues 95–97 form an interaction with target base in tRNA region; the sequence is NPD. Cys-100 acts as the Nucleophile in catalysis. A disulfide bridge links Cys-100 with Cys-201. Position 124 (Gly-124) interacts with ATP. The segment at 151–153 is interaction with tRNA; that stretch reads KDQ. The Cysteine persulfide intermediate role is filled by Cys-201. The segment at 317–318 is interaction with tRNA; sequence RY.

It belongs to the MnmA/TRMU family.

The protein resides in the cytoplasm. The enzyme catalyses S-sulfanyl-L-cysteinyl-[protein] + uridine(34) in tRNA + AH2 + ATP = 2-thiouridine(34) in tRNA + L-cysteinyl-[protein] + A + AMP + diphosphate + H(+). Catalyzes the 2-thiolation of uridine at the wobble position (U34) of tRNA, leading to the formation of s(2)U34. This is tRNA-specific 2-thiouridylase MnmA from Janthinobacterium sp. (strain Marseille) (Minibacterium massiliensis).